A 150-amino-acid polypeptide reads, in one-letter code: Putative HTH-type transcriptional regulator HI_0379 (150 aa).

The region spanning 2-131 (KLTSKGRYAV…NEITLAELVN (130 aa)) is the HTH rrf2-type domain.

The chain is Putative HTH-type transcriptional regulator HI_0379 from Haemophilus influenzae (strain ATCC 51907 / DSM 11121 / KW20 / Rd).